The following is a 149-amino-acid chain: Transcriptional regulator MraZ (149 aa).

2 SpoVT-AbrB domains span residues 5–52 and 81–124; these read ITTL…PLPE and AEEC…DSMV.

This sequence belongs to the MraZ family. As to quaternary structure, forms oligomers.

The protein localises to the cytoplasm. It localises to the nucleoid. The chain is Transcriptional regulator MraZ from Nitrosococcus oceani (strain ATCC 19707 / BCRC 17464 / JCM 30415 / NCIMB 11848 / C-107).